The chain runs to 343 residues: Ribosomal RNA small subunit methyltransferase C (343 aa).

This sequence belongs to the methyltransferase superfamily. RsmC family. Monomer.

It is found in the cytoplasm. It carries out the reaction guanosine(1207) in 16S rRNA + S-adenosyl-L-methionine = N(2)-methylguanosine(1207) in 16S rRNA + S-adenosyl-L-homocysteine + H(+). In terms of biological role, specifically methylates the guanine in position 1207 of 16S rRNA in the 30S particle. The polypeptide is Ribosomal RNA small subunit methyltransferase C (Escherichia coli O1:K1 / APEC).